The following is a 470-amino-acid chain: MTVRTRFAPSPTGFLHVGGVRTALFSWLYAKHHNGQFILRIEDTDRERSTQESVQAILDGMAWLGLNFDEGPYYQTERYARYQQVAQQLLKEGKAYRCQCSKERLEALREAQLAAKEKPRYDGHCRNQILPDSGVPYVIRFRNPDAGIVSFHDEVYGDIHVDNSELDDLILVRSDGHPTYNFAVVIDDWDMKITHVIRGDDHINNTPRQINLFKALDAPVPVFAHLPMILGEDGKRLSKRHGAVSVLQFKELGVLPHALLNYLVRLGWSHGDQEIFSVQEMINSFDLKNVSRGVSSFNYDKLYWLNQHYQKSDSQESVANALQWHFEQAGIDLNQGPDLKDLVAVQAERCKSLAEMCQISQYFYTDTIEYNEDAVKKHLRPVVLEPLMVLHERLKALDEWKNDKIQECINDVSLQFDLNLGKIAQPLRVAVTGSGTSPSIDMTLALLGKNKSIKRLEDALEKIRARASAV.

A 'HIGH' region motif is present at residues 9–19 (PSPTGFLHVGG). Positions 236–240 (RLSKR) match the 'KMSKS' region motif. Lys-239 provides a ligand contact to ATP.

The protein belongs to the class-I aminoacyl-tRNA synthetase family. Glutamate--tRNA ligase type 1 subfamily. In terms of assembly, monomer.

The protein resides in the cytoplasm. It catalyses the reaction tRNA(Glu) + L-glutamate + ATP = L-glutamyl-tRNA(Glu) + AMP + diphosphate. Functionally, catalyzes the attachment of glutamate to tRNA(Glu) in a two-step reaction: glutamate is first activated by ATP to form Glu-AMP and then transferred to the acceptor end of tRNA(Glu). The chain is Glutamate--tRNA ligase from Legionella pneumophila (strain Paris).